An 86-amino-acid polypeptide reads, in one-letter code: Large ribosomal subunit protein bL28 (86 aa).

Belongs to the bacterial ribosomal protein bL28 family.

The polypeptide is Large ribosomal subunit protein bL28 (Phocaeicola vulgatus (strain ATCC 8482 / DSM 1447 / JCM 5826 / CCUG 4940 / NBRC 14291 / NCTC 11154) (Bacteroides vulgatus)).